A 220-amino-acid polypeptide reads, in one-letter code: Antistasin (220 aa).

An N-terminal signal peptide occupies residues 1–19 (MNYLFVFLALSAAVTFANA). Antistasin-like domains are found at residues 21–46 (CNKI…ICKC), 54–79 (CSNR…ICRC), 91–117 (CDGL…KCEC), 120–145 (CKQF…TCKC), 154–180 (CDDL…KCEC), and 183–208 (CKNF…TCKC).

This sequence belongs to the protease inhibitor I15 (antistasin) family. As to expression, gland cells. It is more strongly expressed in the head than in the gastric tissue.

It localises to the secreted. Functionally, this highly disulfide-bonded protein is a potent inhibitor of factor Xa. Facilitates digestion of tissues and may also protect the gastric tissues from its own digestive enzymes. May have therapeutic utility as an anticoagulant. Also exhibits a strong metastatic activity. This chain is Antistasin, found in Hydra vulgaris (Hydra).